A 254-amino-acid polypeptide reads, in one-letter code: 5'-nucleotidase SurE (254 aa).

A divalent metal cation is bound by residues Asp-8, Asp-9, Ser-40, and Asn-93.

The protein belongs to the SurE nucleotidase family. A divalent metal cation is required as a cofactor.

It localises to the cytoplasm. The catalysed reaction is a ribonucleoside 5'-phosphate + H2O = a ribonucleoside + phosphate. Nucleotidase that shows phosphatase activity on nucleoside 5'-monophosphates. The sequence is that of 5'-nucleotidase SurE from Methylobacterium radiotolerans (strain ATCC 27329 / DSM 1819 / JCM 2831 / NBRC 15690 / NCIMB 10815 / 0-1).